The primary structure comprises 177 residues: Ribonuclease alpha-sarcin (177 aa).

An N-terminal signal peptide occupies residues 1-27; that stretch reads MVAIKNLVLVALTAVTALAVPSPLEAR. 2 disulfide bridges follow: cysteine 33–cysteine 175 and cysteine 103–cysteine 159. Residue histidine 77 is part of the active site. A disordered region spans residues 86–119; it reads DGKLPKGRTPIKFGKSDCDRPPKHSKDGNGKTDH. The span at 99 to 119 shows a compositional bias: basic and acidic residues; sequence GKSDCDRPPKHSKDGNGKTDH. The Proton acceptor role is filled by glutamate 123. Residue histidine 164 is the Proton donor of the active site.

The protein belongs to the ribonuclease U2 family.

It localises to the secreted. It catalyses the reaction a 28S rRNA containing guanosine-adenosine pair + H2O = an [RNA fragment]-3'-adenosine-3'-phosphate + a 5'-a hydroxy-guanosine-3'-[RNA fragment].. Functionally, alpha-sarcin is specific for purines in both single- and double-stranded RNA. Its toxic action on eukaryotic cells is the result of cleavage of a single phosphodiester bond in the 60S subunit of ribosomes. Inhibits both the EFl (elongation factor 1)-dependent binding of aminoacyl-tRNA and the GTP-dependent binding of EF2 (elongation factor 2) to ribosomes. The sequence is that of Ribonuclease alpha-sarcin (sar) from Aspergillus giganteus.